The following is a 173-amino-acid chain: Thiol-disulfide oxidoreductase ResA (173 aa).

A helical; Signal-anchor for type II membrane protein transmembrane segment spans residues 10–29; that stretch reads VIILLILCGAVGFTLYQGFF. The Thioredoxin domain maps to 35–173; it reads MQIGKEAPNF…LEGYLQKITP (139 aa). A disulfide bond links cysteine 73 and cysteine 76.

It belongs to the thioredoxin family. ResA subfamily.

The protein resides in the cell membrane. It participates in protein modification; cytochrome c assembly. Functionally, thiol-disulfide oxidoreductase which is required in disulfide reduction during c-type cytochrome synthesis. May accept reducing equivalents from CcdA, leading to breakage of disulfide bonds in apocytochrome c; following this reduction heme can be covalently attached. This Bacillus cereus (strain ZK / E33L) protein is Thiol-disulfide oxidoreductase ResA.